Consider the following 160-residue polypeptide: UPF0178 protein XC_1827 (160 aa).

The protein belongs to the UPF0178 family.

This Xanthomonas campestris pv. campestris (strain 8004) protein is UPF0178 protein XC_1827.